Reading from the N-terminus, the 409-residue chain is Argininosuccinate synthase (409 aa).

ATP-binding positions include 12-20 (AYSGGLDTS) and Ala-39. 2 residues coordinate L-citrulline: Tyr-90 and Ser-95. Gly-120 lines the ATP pocket. L-aspartate is bound by residues Thr-122, Asn-126, and Asp-127. Asn-126 serves as a coordination point for L-citrulline. Arg-130, Ser-181, Ser-190, Glu-266, and Tyr-278 together coordinate L-citrulline.

The protein belongs to the argininosuccinate synthase family. Type 1 subfamily. As to quaternary structure, homotetramer.

Its subcellular location is the cytoplasm. It catalyses the reaction L-citrulline + L-aspartate + ATP = 2-(N(omega)-L-arginino)succinate + AMP + diphosphate + H(+). It functions in the pathway amino-acid biosynthesis; L-arginine biosynthesis; L-arginine from L-ornithine and carbamoyl phosphate: step 2/3. This chain is Argininosuccinate synthase, found in Gluconacetobacter diazotrophicus (strain ATCC 49037 / DSM 5601 / CCUG 37298 / CIP 103539 / LMG 7603 / PAl5).